Consider the following 68-residue polypeptide: Large ribosomal subunit protein bL32 (68 aa).

The interval M1 to D20 is disordered.

The protein belongs to the bacterial ribosomal protein bL32 family.

The protein is Large ribosomal subunit protein bL32 of Ruegeria sp. (strain TM1040) (Silicibacter sp.).